Here is a 1677-residue protein sequence, read N- to C-terminus: Pentafunctional AROM polypeptide (1677 aa).

A 3-dehydroquinate synthase region spans residues 1–394 (MAVADDTKAD…YEQKASIVED (394 aa)). NAD(+) contacts are provided by residues 50–52 (DDN), 89–92 (ETSK), 120–122 (GGV), and aspartate 125. Residue arginine 136 participates in 7-phospho-2-dehydro-3-deoxy-D-arabino-heptonate binding. 145 to 146 (TT) serves as a coordination point for NAD(+). Aspartate 152 and lysine 158 together coordinate 7-phospho-2-dehydro-3-deoxy-D-arabino-heptonate. NAD(+) is bound at residue lysine 167. Residue asparagine 168 participates in 7-phospho-2-dehydro-3-deoxy-D-arabino-heptonate binding. NAD(+) contacts are provided by residues 185 to 188 (YLET) and asparagine 196. Residue glutamate 200 participates in Zn(2+) binding. 7-phospho-2-dehydro-3-deoxy-D-arabino-heptonate is bound by residues 200 to 203 (EVVK) and lysine 260. Residue glutamate 270 is the Proton acceptor; for 3-dehydroquinate synthase activity of the active site. Residues 274–278 (RNLVN) and histidine 281 each bind 7-phospho-2-dehydro-3-deoxy-D-arabino-heptonate. Histidine 281 is a Zn(2+) binding site. The active-site Proton acceptor; for 3-dehydroquinate synthase activity is histidine 285. Residues histidine 297 and lysine 366 each coordinate 7-phospho-2-dehydro-3-deoxy-D-arabino-heptonate. Residue histidine 297 coordinates Zn(2+). Residues 407–858 (VVPSIPTGNV…WDDLENKIGI (452 aa)) form an EPSP synthase region. Cysteine 840 serves as the catalytic For EPSP synthase activity. The interval 885 to 1113 (NSSILLIGMR…GQQRRTYFLC (229 aa)) is shikimate kinase. 892–899 (GMRGTGKT) contacts ATP. Positions 1114–1341 (LTYPDVRHAF…AAPGQLSFKQ (228 aa)) are 3-dehydroquinase. The active-site Proton acceptor; for 3-dehydroquinate dehydratase activity is histidine 1243. Residue lysine 1271 is the Schiff-base intermediate with substrate; for 3-dehydroquinate dehydratase activity of the active site. A shikimate dehydrogenase region spans residues 1354–1677 (SKHFHLFGTP…TRVWEKYGEV (324 aa)).

The protein in the N-terminal section; belongs to the sugar phosphate cyclases superfamily. Dehydroquinate synthase family. In the 2nd section; belongs to the EPSP synthase family. This sequence in the 3rd section; belongs to the shikimate kinase family. It in the 4th section; belongs to the type-I 3-dehydroquinase family. The protein in the C-terminal section; belongs to the shikimate dehydrogenase family. Homodimer. Requires Zn(2+) as cofactor.

The protein localises to the cytoplasm. The catalysed reaction is 7-phospho-2-dehydro-3-deoxy-D-arabino-heptonate = 3-dehydroquinate + phosphate. The enzyme catalyses 3-dehydroquinate = 3-dehydroshikimate + H2O. It carries out the reaction shikimate + NADP(+) = 3-dehydroshikimate + NADPH + H(+). It catalyses the reaction shikimate + ATP = 3-phosphoshikimate + ADP + H(+). The catalysed reaction is 3-phosphoshikimate + phosphoenolpyruvate = 5-O-(1-carboxyvinyl)-3-phosphoshikimate + phosphate. It participates in metabolic intermediate biosynthesis; chorismate biosynthesis; chorismate from D-erythrose 4-phosphate and phosphoenolpyruvate: step 2/7. Its pathway is metabolic intermediate biosynthesis; chorismate biosynthesis; chorismate from D-erythrose 4-phosphate and phosphoenolpyruvate: step 3/7. It functions in the pathway metabolic intermediate biosynthesis; chorismate biosynthesis; chorismate from D-erythrose 4-phosphate and phosphoenolpyruvate: step 4/7. The protein operates within metabolic intermediate biosynthesis; chorismate biosynthesis; chorismate from D-erythrose 4-phosphate and phosphoenolpyruvate: step 5/7. It participates in metabolic intermediate biosynthesis; chorismate biosynthesis; chorismate from D-erythrose 4-phosphate and phosphoenolpyruvate: step 6/7. Functionally, the AROM polypeptide catalyzes 5 consecutive enzymatic reactions in prechorismate polyaromatic amino acid biosynthesis. The sequence is that of Pentafunctional AROM polypeptide from Coprinopsis cinerea (strain Okayama-7 / 130 / ATCC MYA-4618 / FGSC 9003) (Inky cap fungus).